A 355-amino-acid chain; its full sequence is Protein-tyrosine sulfotransferase 1 (355 aa).

The Cytoplasmic portion of the chain corresponds to 1–8; it reads MIGKLKQN. A helical; Signal-anchor for type II membrane protein membrane pass occupies residues 9–25; that stretch reads LLVACLVISSVTVFYLC. Residues 26-355 lie on the Lumenal side of the membrane; sequence RHAMDCHHRI…QKSPEKPNPS (330 aa). Asn-55 carries N-linked (GlcNAc...) asparagine glycosylation. 76–80 contacts 3'-phosphoadenylyl sulfate; the sequence is RSGTT. Cys-94 and Cys-154 are oxidised to a cystine. Glu-97 serves as the catalytic Proton donor/acceptor. An interaction with peptide substrate region spans residues 99–103; sequence RVIPR. The 3'-phosphoadenylyl sulfate site is built by Arg-181, Ser-189, and Arg-193. Cys-223 and Cys-230 are disulfide-bonded. 3'-phosphoadenylyl sulfate is bound by residues Tyr-235, 282–291, and Lys-297; that span reads STDQVIKPVN. The segment at 325-355 is disordered; sequence HANPPNYGRPDPLVLDNTRRLQKSPEKPNPS. Residues 341 to 355 show a composition bias toward basic and acidic residues; sequence NTRRLQKSPEKPNPS.

The protein belongs to the protein sulfotransferase family.

The protein resides in the golgi apparatus membrane. It catalyses the reaction L-tyrosyl-[protein] + 3'-phosphoadenylyl sulfate = O-sulfo-L-tyrosine-[protein] + adenosine 3',5'-bisphosphate + H(+). Functionally, catalyzes the O-sulfation of tyrosine residues within acidic motifs of polypeptides, using 3'-phosphoadenylyl sulfate (PAPS) as cosubstrate. The protein is Protein-tyrosine sulfotransferase 1 (tpst1) of Danio rerio (Zebrafish).